Consider the following 326-residue polypeptide: Methyltransferase phqN (326 aa).

This sequence belongs to the class I-like SAM-binding methyltransferase superfamily. Erg6/SMT family.

It functions in the pathway alkaloid biosynthesis. Methyltransferase; part of the gene cluster that mediates the biosynthesis of paraherquamide, a fungal indole alkaloid that belongs to a family of natural products containing a characteristic bicyclo[2.2.2]diazaoctane core. The first steps in the biosynthesis of paraherquamide is the production of the beta-methyl-proline precursor from L-isoleucine. They require oxidation of a terminally hydroxylated L-isoleucine to the corresponding aldehyde by enzymes which have still to be identified. Spontaneous cyclization and dehydration would yield the 4-methyl pyrolline-5-carboxylic acid, which is then reduced by the pyrroline-5-carboxylate reductase phqD leading to the beta-methyl-proline precursor. The next step of paraherquamide biosynthesis involves coupling of beta-methyl-proline and L-tryptophan by the bimodular NRPS phqB, to produce a monooxopiperazine intermediate. The reductase (R) domain of phqB utilizes NADPH for hydride transfer to reduce the thioester bond of the T domain-tethered linear dipeptide to a hemithioaminal intermediate, which spontaneously cleaves the C-S bond to release the aldehyde product. This compound undergoes spontaneous cyclization and dehydration to give a dienamine which is reverse prenylated at C-2 by the reverse prenyltransferase phqJ. The other prenyltransferase present in the cluster, phqI may be a redundant gene in the pathway. During biosynthetic assembly, the key step to produce the polycyclic core is catalyzed by the bifunctional reductase and intramolecular [4+2] Diels-Alderase, phqE, resulting in formation of the [2.2.2] diazaoctane intermediate preparaherquamide. Following formation of preparaherquamide, an indole 2,3-epoxidation-initiated pinacol-like rearrangement is catalyzed by the phqK FAD-dependent monooxygenase. The prenyltransferase phqA, the cytochrome P450 monooxygenase phqL, and the FAD-linked oxidoreductase phqH (or the cytochrome P450 monooxygenase phqM), are proposed to be involved in the formation of the pyran ring. The FAD-dependent monooxygenase phqK is likely responsible for generation of the spiro-oxindole, and the N-methylation is likely mediated by the phqN methyltransferase leading to the isolable natural product paraherquamide F. However, the order of these biosynthetic steps has still to be determined. In late-stage paraherquamide biosynthesis, the third P450 monooxygenase, phqO, is probably responsible for the C-14 hydroxylation, transforming paraherquamide F to paraherquamide G, and paraherquamide E to the final product paraherquamide A. The expansion from the 6-membered ring pyran (in paraherquamides F and G) to the 7-membered dioxepin ring (in paraherquamides A and E) represents a poorly understood but intriguing process that probably involves the 2-oxoglutarate-dependent dioxygenase phqC. Finally, the remaining members of the paraherquamide cluster, including phqI as well as phqM (or phqH), do not have a clearly prescribed role and appear to be redundant. In Penicillium fellutanum, this protein is Methyltransferase phqN.